The following is a 162-amino-acid chain: MDQQPPVQPQQRPPPSLTNPRFTLELEFVSSLANPYYLSHLAVTYPNLLGISKSSDDSNTSTEGPDPEAQAFAAYLAYLYSYWKTPEYAQFLTHPGATLRALRLLQEESFRRDIIRPQVIEALAGNGLENVQGGQNVEAGDTGHNEGDQGTQQDKENIALKT.

Residues 131 to 162 (VQGGQNVEAGDTGHNEGDQGTQQDKENIALKT) are disordered. Residues 141-162 (DTGHNEGDQGTQQDKENIALKT) are compositionally biased toward basic and acidic residues.

This sequence belongs to the Mediator complex subunit 31 family. Component of the Mediator complex.

It is found in the nucleus. Component of the Mediator complex, a coactivator involved in the regulated transcription of nearly all RNA polymerase II-dependent genes. Mediator functions as a bridge to convey information from gene-specific regulatory proteins to the basal RNA polymerase II transcription machinery. Mediator is recruited to promoters by direct interactions with regulatory proteins and serves as a scaffold for the assembly of a functional preinitiation complex with RNA polymerase II and the general transcription factors. The protein is Mediator of RNA polymerase II transcription subunit 31 (soh1) of Aspergillus fumigatus (strain ATCC MYA-4609 / CBS 101355 / FGSC A1100 / Af293) (Neosartorya fumigata).